A 169-amino-acid chain; its full sequence is S-ribosylhomocysteine lyase (169 aa).

Residues histidine 54, histidine 58, and cysteine 128 each coordinate Fe cation.

Belongs to the LuxS family. Homodimer. It depends on Fe cation as a cofactor.

It catalyses the reaction S-(5-deoxy-D-ribos-5-yl)-L-homocysteine = (S)-4,5-dihydroxypentane-2,3-dione + L-homocysteine. Functionally, involved in the synthesis of autoinducer 2 (AI-2) which is secreted by bacteria and is used to communicate both the cell density and the metabolic potential of the environment. The regulation of gene expression in response to changes in cell density is called quorum sensing. Catalyzes the transformation of S-ribosylhomocysteine (RHC) to homocysteine (HC) and 4,5-dihydroxy-2,3-pentadione (DPD). This Shewanella loihica (strain ATCC BAA-1088 / PV-4) protein is S-ribosylhomocysteine lyase.